Here is a 238-residue protein sequence, read N- to C-terminus: 3-deoxy-D-manno-octulosonic acid kinase (238 aa).

The active site involves aspartate 167.

This sequence belongs to the protein kinase superfamily. KdkA/RfaP family.

It localises to the cell inner membrane. It catalyses the reaction an alpha-Kdo-(2-&gt;6)-lipid IVA + ATP = a 4-O-phospho-alpha-Kdo-(2-&gt;6)-lipid IVA + ADP + H(+). It functions in the pathway bacterial outer membrane biogenesis; LPS core biosynthesis. In terms of biological role, catalyzes the ATP-dependent phosphorylation of the 3-deoxy-D-manno-octulosonic acid (Kdo) residue in Kdo-lipid IV(A) at the 4-OH position. The chain is 3-deoxy-D-manno-octulosonic acid kinase from Vibrio parahaemolyticus serotype O3:K6 (strain RIMD 2210633).